The following is a 233-amino-acid chain: Small heat shock protein hspF (233 aa).

Positions 129 to 233 constitute a sHSP domain; it reads IPLFTFFEPL…ILLITVNKFL (105 aa).

This sequence belongs to the small heat shock protein (HSP20) family.

The protein is Small heat shock protein hspF (hspF-1) of Dictyostelium discoideum (Social amoeba).